The sequence spans 347 residues: NADH-ubiquinone oxidoreductase chain 2 (347 aa).

Transmembrane regions (helical) follow at residues 1–21, 25–45, 59–79, 96–116, 127–147, 149–169, 178–198, 201–221, 240–260, 274–294, and 326–346; these read MNPAIFTTIILTMILGTMIVT, HWLTVWIGFEMNMLAIIPILM, YFLTQATASMLLMLAITINLV, ITMTLAMAMKLGLSPFHFWVP, GLILLTWQKLAPMSILYQISP, INLELLLMMAILSIAIGGWGG, IMAYSSIAHMGWMTAIMAYNP, TLLNLXVYILLTTTXFMMLML, LATTILLIMLSLGGLPPLSGF, DSIIMPTIMAMAALLNLYFYM, and ISPLIILSTLXLPLSPMLTLL.

Belongs to the complex I subunit 2 family. Core subunit of respiratory chain NADH dehydrogenase (Complex I) which is composed of 45 different subunits. Interacts with TMEM242.

The protein resides in the mitochondrion inner membrane. It carries out the reaction a ubiquinone + NADH + 5 H(+)(in) = a ubiquinol + NAD(+) + 4 H(+)(out). Its function is as follows. Core subunit of the mitochondrial membrane respiratory chain NADH dehydrogenase (Complex I) which catalyzes electron transfer from NADH through the respiratory chain, using ubiquinone as an electron acceptor. Essential for the catalytic activity and assembly of complex I. This Dobsonia minor (Lesser bare-backed fruit bat) protein is NADH-ubiquinone oxidoreductase chain 2.